Consider the following 542-residue polypeptide: Carboxypeptidase Y (542 aa).

A signal peptide spans 1–21; sequence MKLSKSTLIATLALTATSTNA. A propeptide spanning residues 22 to 127 is cleaved from the precursor; it reads LVVQNPFSNI…DAQVPNHKLR (106 aa). 5 disulfides stabilise this stretch: Cys-182–Cys-421, Cys-316–Cys-330, Cys-340–Cys-363, Cys-347–Cys-356, and Cys-385–Cys-391. A glycan (N-linked (GlcNAc...) asparagine) is linked at Asn-213. Ser-269 is a catalytic residue. The N-linked (GlcNAc...) asparagine glycan is linked to Asn-291. Residue Asp-461 is part of the active site. Cys-464 lines the substrate pocket. Residue His-518 is part of the active site. Met-519 is a binding site for substrate.

The protein belongs to the peptidase S10 family.

It is found in the vacuole. The catalysed reaction is Release of a C-terminal amino acid with broad specificity.. Functionally, involved in degradation of small peptides. This Candida albicans (Yeast) protein is Carboxypeptidase Y (CPY1).